Consider the following 340-residue polypeptide: Pre-mRNA-splicing factor cwf17 (340 aa).

7 WD repeats span residues 48–87 (GHTAEVLVARFDPSGSYFASGGMDRQILLWNVFGDVKNYG), 91–130 (GCKGAITDLQWSRDSRVVYCSSSDTHLMSWDAVSGQKIRK), 133–173 (GHAG…CIKT), 175–214 (EEKYPLTAVAIAQQGTQVFIGGIDGAIKIWDLRNNHCSHV), 217–256 (GHKDIITSLAISKDGSSLLSNSMDNTVRIFDVKPFASAQR), 267–306 (GQEHNLLGVAWSRNSRFVGAGSSDKNVYVWSATGDLRYVL), and 308–339 (GHEGSVNHVDFHPHQDIILSCSSDRTIFLGEL).

In terms of assembly, belongs to the 40S cdc5-associated complex (or cwf complex), a spliceosome sub-complex reminiscent of a late-stage spliceosome composed of the U2, U5 and U6 snRNAs and at least brr2, cdc5, cwf2/prp3, cwf3/syf1, cwf4/syf3, cwf5/ecm2, spp42/cwf6, cwf7/spf27, cwf8, cwf9, cwf10, cwf11, cwf12, prp45/cwf13, cwf14, cwf15, cwf16, cwf17, cwf18, cwf19, cwf20, cwf21, cwf22, cwf23, cwf24, cwf25, cwf26, cyp7/cwf27, cwf28, cwf29/ist3, lea1, msl1, prp5/cwf1, prp10, prp12/sap130, prp17, prp22, sap61, sap62, sap114, sap145, slu7, smb1, smd1, smd3, smf1, smg1 and syf2.

It is found in the nucleus. In terms of biological role, involved in mRNA splicing where it associates with cdc5 and the other cwf proteins as part of the spliceosome. The polypeptide is Pre-mRNA-splicing factor cwf17 (cwf17) (Schizosaccharomyces pombe (strain 972 / ATCC 24843) (Fission yeast)).